A 20-amino-acid chain; its full sequence is Brevinin-1ITa (20 aa).

Position 8 is a methionine sulfoxide; partial (M8). Residues C14 and C20 are joined by a disulfide bond.

The protein belongs to the frog skin active peptide (FSAP) family. Brevinin subfamily. Expressed by the skin glands.

Its subcellular location is the secreted. In terms of biological role, antimicrobial peptide active against Gram-positive bacterium S.epidermidis ATCC 12228 (MIC=4 uM), against Gram-negative bacterium E.coli ATCC 25922 (MIC=64 uM) and against yeast C.parapsilosis ATCC 22019 (MIC=16 uM). Has hemolytic and cytotoxic activity. In Rana italica (Italian stream frog), this protein is Brevinin-1ITa.